Consider the following 157-residue polypeptide: MMKMEGIALKKRLSWISVCLLVLVSAAGMLFSTAAKTETSSHKAHTEAQVINTFDGVADYLQTYHKLPDNYITKSEAQALGWVASKGNLADVAPGKSIGGDIFSNREGKLPGKSGRTWREADINYTSGFRNSDRILYSSDWLIYKTTDHYQTFTKIR.

Residues 1–34 form the signal peptide; sequence MMKMEGIALKKRLSWISVCLLVLVSAAGMLFSTA. Positions 35 to 47 are excised as a propeptide; the sequence is AKTETSSHKAHTE. Catalysis depends on glutamate 120, which acts as the Proton acceptor. Histidine 149 (proton donor) is an active-site residue.

Belongs to the ribonuclease N1/T1 family.

It localises to the secreted. Hydrolyzes phosphodiester bonds in RNA, poly- and oligoribonucleotides resulting in 3'-nucleoside monophosphates via 2',3'-cyclophosphate intermediates. This Bacillus amyloliquefaciens (Bacillus velezensis) protein is Ribonuclease.